The following is a 315-amino-acid chain: Probable cell division protein WhiA (315 aa).

Positions 277-311 form a DNA-binding region, H-T-H motif; the sequence is SLQELGAMMPSGQISKSGVNHRLRKLNQIAEGYQQ.

This sequence belongs to the WhiA family.

In terms of biological role, involved in cell division and chromosome segregation. The polypeptide is Probable cell division protein WhiA (Lacticaseibacillus casei (strain BL23) (Lactobacillus casei)).